A 496-amino-acid polypeptide reads, in one-letter code: Probable CtpA-like serine protease (496 aa).

A compositionally biased stretch (basic and acidic residues) spans 1–16 (MDDKQHTSSSDDERAE). Residues 1–27 (MDDKQHTSSSDDERAEIATSNQDQQTN) are disordered. Residues 18 to 27 (ATSNQDQQTN) show a composition bias toward polar residues. Residues 39–59 (FISILIGTILITAVITVVAYI) form a helical membrane-spanning segment. One can recognise a PDZ domain in the interval 124–206 (TKSFNEGVSG…TEVTLTVQRG (83 aa)). Residues S329, D340, and K354 each act as charge relay system in the active site.

This sequence belongs to the peptidase S41A family.

It localises to the cell membrane. The protein is Probable CtpA-like serine protease of Staphylococcus aureus (strain bovine RF122 / ET3-1).